Reading from the N-terminus, the 344-residue chain is Tripartite motif-containing protein 44 (344 aa).

2 disordered regions span residues 1–25 (MASG…EPDE) and 66–165 (AWTP…EFDP). The span at 75–92 (GAGKEEAEVKVEQEREIE) shows a compositional bias: basic and acidic residues. A compositionally biased stretch (acidic residues) spans 93–165 (SEAGEESESE…ETEAESEFDP (73 aa)). The B box-type zinc-finger motif lies at 174 to 215 (VAKRKCPDHGLDLSTYCQEDRQLICVLCPVIGAHQGHQLSTL). 4 residues coordinate Zn(2+): Cys-179, His-182, Cys-201, and His-207. Positions 290–325 (AHVTEILADIQSHMDRLMTQMAQAKEQLDTSNESAE) form a coiled coil. Residues 309–344 (QMAQAKEQLDTSNESAEPKAEGDEEGPSGASEEEDT) form a disordered region. Residues 330 to 344 (GDEEGPSGASEEEDT) are compositionally biased toward acidic residues. Residues Ser-336 and Ser-339 each carry the phosphoserine modification.

As to quaternary structure, interacts (via coiled coil) with TRIM17 (via coiled coil). As to expression, highly expressed in testis.

Functionally, may play a role in the process of differentiation and maturation of neuronal cells. May regulate the activity of TRIM17. Is a negative regulator of PAX6 expression. This is Tripartite motif-containing protein 44 (TRIM44) from Homo sapiens (Human).